We begin with the raw amino-acid sequence, 603 residues long: DNA mismatch repair protein MutL (603 aa).

It belongs to the DNA mismatch repair MutL/HexB family.

Functionally, this protein is involved in the repair of mismatches in DNA. It is required for dam-dependent methyl-directed DNA mismatch repair. May act as a 'molecular matchmaker', a protein that promotes the formation of a stable complex between two or more DNA-binding proteins in an ATP-dependent manner without itself being part of a final effector complex. This chain is DNA mismatch repair protein MutL, found in Listeria monocytogenes serotype 4a (strain HCC23).